A 247-amino-acid polypeptide reads, in one-letter code: PF03932 family protein CutC (247 aa).

It belongs to the CutC family.

Its subcellular location is the cytoplasm. The chain is PF03932 family protein CutC from Klebsiella pneumoniae subsp. pneumoniae (strain ATCC 700721 / MGH 78578).